Reading from the N-terminus, the 409-residue chain is Arginine biosynthesis bifunctional protein ArgJ (409 aa).

Positions 165, 191, 202, 282, 404, and 409 each coordinate substrate. T202 serves as the catalytic Nucleophile.

It belongs to the ArgJ family. In terms of assembly, heterotetramer of two alpha and two beta chains.

The protein localises to the cytoplasm. The catalysed reaction is N(2)-acetyl-L-ornithine + L-glutamate = N-acetyl-L-glutamate + L-ornithine. The enzyme catalyses L-glutamate + acetyl-CoA = N-acetyl-L-glutamate + CoA + H(+). It functions in the pathway amino-acid biosynthesis; L-arginine biosynthesis; L-ornithine and N-acetyl-L-glutamate from L-glutamate and N(2)-acetyl-L-ornithine (cyclic): step 1/1. The protein operates within amino-acid biosynthesis; L-arginine biosynthesis; N(2)-acetyl-L-ornithine from L-glutamate: step 1/4. Its function is as follows. Catalyzes two activities which are involved in the cyclic version of arginine biosynthesis: the synthesis of N-acetylglutamate from glutamate and acetyl-CoA as the acetyl donor, and of ornithine by transacetylation between N(2)-acetylornithine and glutamate. The polypeptide is Arginine biosynthesis bifunctional protein ArgJ (Parasynechococcus marenigrum (strain WH8102)).